A 212-amino-acid polypeptide reads, in one-letter code: ER lumen protein-retaining receptor 2 (212 aa).

Topologically, residues 1–4 (MNIF) are lumenal. The chain crosses the membrane as a helical span at residues 5–24 (RLTGDLSHLAAIVILLLKIW). Residues 25-32 (KTRSCAGI) are Cytoplasmic-facing. The chain crosses the membrane as a helical span at residues 33 to 52 (SGKSQLLFALVFTTRYLDLF). An interaction with the K-D-E-L motif on target proteins region spans residues 47–48 (RY). Residues 53-58 (TSFISL) are Lumenal-facing. Residues 59 to 79 (YNTSMKLIYIACSYATVYLIY) form a helical membrane-spanning segment. Residues 80–92 (MKFKATYDGNHDT) are Cytoplasmic-facing. The helical transmembrane segment at 93–110 (FRVEFLVVPVGGLSFLVN) threads the bilayer. Residues 111 to 116 (HDFSPL) are Lumenal-facing. Residues 117-135 (EILWTFSIYLESVAILPQL) form a helical membrane-spanning segment. The Cytoplasmic portion of the chain corresponds to 136–149 (FMISKTGEAETITT). Residues 150-168 (HYLFFLGLYRALYLVNWIW) form a helical membrane-spanning segment. The interaction with the K-D-E-L motif on target proteins stretch occupies residues 159–169 (RALYLVNWIWR). Residues 169–178 (RFYFEGFFDL) lie on the Lumenal side of the membrane. Residues 179–199 (IAVVAGVVQTILYCDFFYLYI) traverse the membrane as a helical segment. Residues 200–212 (TKVLKGKKLSLPA) are Cytoplasmic-facing. The segment at 204–207 (KGKK) is important for recycling of cargo proteins with the sequence motif K-D-E-L from the Golgi to the endoplasmic reticulum.

Belongs to the ERD2 family.

The protein localises to the endoplasmic reticulum membrane. It is found in the golgi apparatus membrane. The protein resides in the cytoplasmic vesicle. Its subcellular location is the COPI-coated vesicle membrane. Functionally, membrane receptor that binds the K-D-E-L sequence motif in the C-terminal part of endoplasmic reticulum resident proteins and maintains their localization in that compartment by participating to their vesicle-mediated recycling back from the Golgi. Binding is pH dependent, and is optimal at pH 5-5.4. This chain is ER lumen protein-retaining receptor 2 (Kdelr2), found in Mus musculus (Mouse).